A 185-amino-acid polypeptide reads, in one-letter code: Elongation factor P (185 aa).

Belongs to the elongation factor P family.

It localises to the cytoplasm. It participates in protein biosynthesis; polypeptide chain elongation. Functionally, involved in peptide bond synthesis. Stimulates efficient translation and peptide-bond synthesis on native or reconstituted 70S ribosomes in vitro. Probably functions indirectly by altering the affinity of the ribosome for aminoacyl-tRNA, thus increasing their reactivity as acceptors for peptidyl transferase. The polypeptide is Elongation factor P (Deinococcus radiodurans (strain ATCC 13939 / DSM 20539 / JCM 16871 / CCUG 27074 / LMG 4051 / NBRC 15346 / NCIMB 9279 / VKM B-1422 / R1)).